The chain runs to 277 residues: 4-hydroxy-3-methylbut-2-enyl diphosphate reductase (277 aa).

Cys-12 contacts [4Fe-4S] cluster. (2E)-4-hydroxy-3-methylbut-2-enyl diphosphate contacts are provided by His-36 and His-70. Residues His-36 and His-70 each coordinate dimethylallyl diphosphate. Residues His-36 and His-70 each coordinate isopentenyl diphosphate. A [4Fe-4S] cluster-binding site is contributed by Cys-92. His-120 lines the (2E)-4-hydroxy-3-methylbut-2-enyl diphosphate pocket. His-120 contributes to the dimethylallyl diphosphate binding site. His-120 provides a ligand contact to isopentenyl diphosphate. Glu-122 acts as the Proton donor in catalysis. (2E)-4-hydroxy-3-methylbut-2-enyl diphosphate is bound at residue Thr-158. Cys-186 contacts [4Fe-4S] cluster. The (2E)-4-hydroxy-3-methylbut-2-enyl diphosphate site is built by Ser-214, Asn-216, and Ser-258. The dimethylallyl diphosphate site is built by Ser-214, Asn-216, and Ser-258. Residues Ser-214, Asn-216, and Ser-258 each coordinate isopentenyl diphosphate.

Belongs to the IspH family. Requires [4Fe-4S] cluster as cofactor.

The enzyme catalyses isopentenyl diphosphate + 2 oxidized [2Fe-2S]-[ferredoxin] + H2O = (2E)-4-hydroxy-3-methylbut-2-enyl diphosphate + 2 reduced [2Fe-2S]-[ferredoxin] + 2 H(+). It catalyses the reaction dimethylallyl diphosphate + 2 oxidized [2Fe-2S]-[ferredoxin] + H2O = (2E)-4-hydroxy-3-methylbut-2-enyl diphosphate + 2 reduced [2Fe-2S]-[ferredoxin] + 2 H(+). Its pathway is isoprenoid biosynthesis; dimethylallyl diphosphate biosynthesis; dimethylallyl diphosphate from (2E)-4-hydroxy-3-methylbutenyl diphosphate: step 1/1. It functions in the pathway isoprenoid biosynthesis; isopentenyl diphosphate biosynthesis via DXP pathway; isopentenyl diphosphate from 1-deoxy-D-xylulose 5-phosphate: step 6/6. Functionally, catalyzes the conversion of 1-hydroxy-2-methyl-2-(E)-butenyl 4-diphosphate (HMBPP) into a mixture of isopentenyl diphosphate (IPP) and dimethylallyl diphosphate (DMAPP). Acts in the terminal step of the DOXP/MEP pathway for isoprenoid precursor biosynthesis. The chain is 4-hydroxy-3-methylbut-2-enyl diphosphate reductase from Campylobacter jejuni subsp. jejuni serotype O:23/36 (strain 81-176).